The sequence spans 762 residues: Catalase-peroxidase (762 aa).

A disordered region spans residues 1–22 (MAEAKCPFSQSRSNANVAGGGT). Positions 96–242 (WHSAGTYRVF…LAASHMGLIY (147 aa)) form a cross-link, tryptophyl-tyrosyl-methioninium (Trp-Tyr) (with M-268). H97 (proton acceptor) is an active-site residue. Positions 242–268 (YVNPEGPDGNPDPVAAARDIRTTFGRM) form a cross-link, tryptophyl-tyrosyl-methioninium (Tyr-Met) (with W-96). A heme b-binding site is contributed by H283.

Belongs to the peroxidase family. Peroxidase/catalase subfamily. As to quaternary structure, homodimer or homotetramer. It depends on heme b as a cofactor. Post-translationally, formation of the three residue Trp-Tyr-Met cross-link is important for the catalase, but not the peroxidase activity of the enzyme.

The protein localises to the cytoplasm. The catalysed reaction is H2O2 + AH2 = A + 2 H2O. It catalyses the reaction 2 H2O2 = O2 + 2 H2O. Its function is as follows. Bifunctional enzyme with both catalase and broad-spectrum peroxidase activity. The sequence is that of Catalase-peroxidase from Aspergillus niger (strain ATCC MYA-4892 / CBS 513.88 / FGSC A1513).